The following is a 361-amino-acid chain: 4-hydroxytryptamine kinase (361 aa).

ATP is bound by residues N37, K57, and 118–120 (QDV). The active site involves D224. 248 to 250 (DWE) contacts ATP.

The protein belongs to the methylthioribose kinase family. Monomer. Mg(2+) serves as cofactor.

It carries out the reaction 4-hydroxytryptamine + ATP = norbaeocystin + ADP + H(+). The enzyme catalyses psilocin + ATP = psilocybin + ADP + H(+). The catalysed reaction is 4-hydroxy-N,N,N-trimethyltryptamine + ATP = aeruginascin + ADP + H(+). It participates in secondary metabolite biosynthesis. 4-hydroxytryptamine kinase; part of the gene cluster that mediates the biosynthesis of psilocybin, a psychotropic tryptamine-derived natural product. The first step in the pathway is the decarboxylation of L-tryptophan to tryptamine by the decarboxylase psiD. PsiD does not decarboxylate phenylalanine, tyrosine, or 5-hydroxy- L -tryptophan (5-HTP). 4-hydroxy-L-tryptophan is accepted as substrate by psiD as well. The cytochrome P450 monooxygenase psiH then converts tryptamine to 4-hydroxytryptamine. The kinase psiK catalyzes the 4-O-phosphorylation step by converting 4-hydroxytryptamine into norbaeocystin. The methyltransferase psiM then catalyzes iterative methyl transfer to the amino group of norbaeocystin to yield psilocybin via a monomethylated intermediate, baeocystin. 4-hydroxy-6-methyl-l-tryptophancan also be converted the decarboxylase PsiD, kinase PsiK, and methyltransferase PsiM into respectively 6-methyl-norbaeocystin, 6-methylbaeocystin, and 6-methylpsilocybin. PsiK kinase can also turn psilocin into psilocybin. This activity may represent a protective mechanism to rephosphorylate the unstable psilocin to the stable psilocybin in case of intracellular ester cleavage. Moreover, psiK is able to O-phosphorylate the quaternary amine 4-hydroxy-N,N,N-trimethyltryptamine (4-OH-TMT) to yield aeruginascin, another bioactive compound found in Psilocybe species. This chain is 4-hydroxytryptamine kinase, found in Psilocybe cyanescens.